The chain runs to 215 residues: Probable phosphoglycerate mutase GpmB (215 aa).

Substrate is bound by residues 8 to 15, 21 to 22, arginine 58, arginine 60, 82 to 85, 104 to 105, and 151 to 152; these read RHGETQWN, QG, ELDM, RR, and GI. Histidine 9 acts as the Tele-phosphohistidine intermediate in catalysis. Glutamate 82 functions as the Proton donor/acceptor in the catalytic mechanism.

The protein belongs to the phosphoglycerate mutase family. GpmB subfamily.

The catalysed reaction is (2R)-2-phosphoglycerate = (2R)-3-phosphoglycerate. Its pathway is carbohydrate degradation; glycolysis; pyruvate from D-glyceraldehyde 3-phosphate: step 3/5. The chain is Probable phosphoglycerate mutase GpmB from Citrobacter koseri (strain ATCC BAA-895 / CDC 4225-83 / SGSC4696).